The sequence spans 590 residues: UvrABC system protein C (590 aa).

One can recognise a GIY-YIG domain in the interval D15 to I92. In terms of domain architecture, UVR spans S197–T232.

This sequence belongs to the UvrC family. In terms of assembly, interacts with UvrB in an incision complex.

The protein resides in the cytoplasm. Functionally, the UvrABC repair system catalyzes the recognition and processing of DNA lesions. UvrC both incises the 5' and 3' sides of the lesion. The N-terminal half is responsible for the 3' incision and the C-terminal half is responsible for the 5' incision. The protein is UvrABC system protein C of Ligilactobacillus salivarius (strain UCC118) (Lactobacillus salivarius).